The following is a 364-amino-acid chain: Chorismate synthase (364 aa).

Residue R47 coordinates NADP(+). Residues 125–127 (RFS), G285, 300–304 (KPTPS), and R327 each bind FMN.

The protein belongs to the chorismate synthase family. In terms of assembly, homotetramer. FMNH2 is required as a cofactor.

It catalyses the reaction 5-O-(1-carboxyvinyl)-3-phosphoshikimate = chorismate + phosphate. The protein operates within metabolic intermediate biosynthesis; chorismate biosynthesis; chorismate from D-erythrose 4-phosphate and phosphoenolpyruvate: step 7/7. In terms of biological role, catalyzes the anti-1,4-elimination of the C-3 phosphate and the C-6 proR hydrogen from 5-enolpyruvylshikimate-3-phosphate (EPSP) to yield chorismate, which is the branch point compound that serves as the starting substrate for the three terminal pathways of aromatic amino acid biosynthesis. This reaction introduces a second double bond into the aromatic ring system. In Dehalococcoides mccartyi (strain ATCC BAA-2100 / JCM 16839 / KCTC 5957 / BAV1), this protein is Chorismate synthase.